Consider the following 520-residue polypeptide: Tetratricopeptide repeat protein 6 (520 aa).

13 TPR repeats span residues 57 to 90, 101 to 138, 139 to 172, 176 to 209, 210 to 243, 245 to 280, 281 to 314, 320 to 347, 348 to 381, 382 to 415, 416 to 449, 450 to 483, and 484 to 517; these read MTMC…ISHS, ADCL…DKNS, YTAF…DATE, LNTF…SRTN, GSLC…NPCF, DAYV…NPAY, IKAR…DPKN, GRAV…ISTT, AEFL…NPKY, SLAY…DPEN, EYVL…CPFW, AAVY…KPND, and ALVY…EDYA.

This chain is Tetratricopeptide repeat protein 6, found in Homo sapiens (Human).